The primary structure comprises 646 residues: A-kinase anchor protein 8-like (646 aa).

The sufficient for activation of CTE-mediated expression stretch occupies residues 1 to 268 (MSYTGFVQGS…MRRTWKTWTT (268 aa)). R208 bears the Asymmetric dimethylarginine; alternate mark. At R208 the chain carries Omega-N-methylarginine; alternate. An omega-N-methylarginine mark is found at R217, R237, and R247. K257 carries the N6-acetyllysine modification. The disordered stretch occupies residues 264 to 381 (KTWTTADFRT…QDKQKKRQRD (118 aa)). T267 bears the Phosphothreonine mark. The Nuclear localization signal motif lies at 274 to 279 (KKKKRK). A Nuclear export signal (NES) motif is present at residues 280 to 296 (QGGSPDEPDSKATRTDC). Phosphoserine is present on S283. The segment covering 287–296 (PDSKATRTDC) has biased composition (basic and acidic residues). T292 bears the Phosphothreonine mark. S297 carries the post-translational modification Phosphoserine. Residues 298 to 314 (DNSDSDNDEGTEGEATE) are compositionally biased toward acidic residues. The span at 337–349 (EDGREEGKEDPEK) shows a compositional bias: basic and acidic residues. A Nuclear localization signal motif is present at residues 362-364 (KRK). 2 C2H2 AKAP95-type zinc fingers span residues 391 to 413 (CSLCKYRTFYEDEMASHLDSKFH) and 484 to 507 (CAACDLFIPMQFGIIQKHLKTMDH). Residues 545–646 (GENPFTDSPE…DDEEGGGGAP (102 aa)) are disordered. S552 bears the Phosphoserine mark. The span at 552–563 (SPEEEKEQEEAE) shows a compositional bias: acidic residues. Residues 564 to 586 (GGALDEGAQGEAAGISEGAEGVP) show a composition bias toward low complexity. A compositionally biased stretch (pro residues) spans 587 to 607 (AQPPVPPEPAPGAVSPPPPPP). Acidic residues predominate over residues 634–646 (DVEDDEEGGGGAP).

This sequence belongs to the AKAP95 family. Interacts (via N-terminus) with DHX9 (via RGG region). Interacts with TMPO isoform Beta, PRPF40A, RNF43, lamin-B. Interacts with HDAC3; increased during mitosis. Interacts with EBV EBNA-LP. Interacts with HIV-1 reverse transcriptase/ribonuclease H. Phosphorylated on serine or threonine residues possibly by PKA; probably modulating the interaction with TMPO isoform Beta. As to expression, ubiquitously expressed. Expressed in the brain cortex (at protein level).

Its subcellular location is the nucleus. The protein localises to the nucleus matrix. It is found in the nucleus speckle. It localises to the PML body. The protein resides in the cytoplasm. In terms of biological role, could play a role in constitutive transport element (CTE)-mediated gene expression by association with DHX9. Increases CTE-dependent nuclear unspliced mRNA export. Proposed to target PRKACA to the nucleus but does not seem to be implicated in the binding of regulatory subunit II of PKA. May be involved in nuclear envelope breakdown and chromatin condensation. May be involved in anchoring nuclear membranes to chromatin in interphase and in releasing membranes from chromating at mitosis. May regulate the initiation phase of DNA replication when associated with TMPO isoform Beta. Required for cell cycle G2/M transition and histone deacetylation during mitosis. In mitotic cells recruits HDAC3 to the vicinity of chromatin leading to deacetylation and subsequent phosphorylation at 'Ser-10' of histone H3; in this function seems to act redundantly with AKAP8. May be involved in regulation of pre-mRNA splicing. (Microbial infection) In case of EBV infection, may target PRKACA to EBNA-LP-containing nuclear sites to modulate transcription from specific promoters. Its function is as follows. (Microbial infection) Can synergize with DHX9 to activate the CTE-mediated gene expression of type D retroviruses. Functionally, (Microbial infection) In case of HIV-1 infection, involved in the DHX9-promoted annealing of host tRNA(Lys3) to viral genomic RNA as a primer in reverse transcription; in vitro negatively regulates DHX9 annealing activity. This is A-kinase anchor protein 8-like (AKAP8L) from Homo sapiens (Human).